The chain runs to 423 residues: MKEIISRHKAGEQIGICSVCSAHPLVIESALRFDLNSGNKVLIEATSNQVNQFGGYTGMKPADFRDFVYGIAQEVGFPRERLILGGDHLGPNCWQNEPAAAAMEKSVELIKAYVVAGFSKIHLDASMSCADDPTPLDPMVVARRAAVLCKAAEETANEEQKCHLTYVIGTEVPVPGGEASTIGSVHVTREVDAARTLETHQIAFRESGLEEALSRVIAIVVQPGVEFDHTQIIHYQPQAAQALSAWIKETPMVYEAHSTDYQTRQAYRALVRDHYAILKVGPALTFALREAIFALAQMENELISPEQRSRVLEVIDEVMLNEPGYWKKYYRPTWSQAMVDIHFSLSDRIRYYWPHPRIRQSVEKLIANLNNVTLPLGLISQFMPVQFERLSEGVLTPTPHNLIIDKIQDVLRAYRFGCTPDVA.

It belongs to the GatZ/KbaZ family. GatZ subfamily. Forms a complex with GatY.

It participates in carbohydrate metabolism; D-tagatose 6-phosphate degradation; D-glyceraldehyde 3-phosphate and glycerone phosphate from D-tagatose 6-phosphate: step 2/2. Component of the tagatose-1,6-bisphosphate aldolase GatYZ that is required for full activity and stability of the Y subunit. Could have a chaperone-like function for the proper and stable folding of GatY. When expressed alone, GatZ does not show any aldolase activity. Is involved in the catabolism of galactitol. This chain is D-tagatose-1,6-bisphosphate aldolase subunit GatZ, found in Salmonella agona (strain SL483).